A 252-amino-acid polypeptide reads, in one-letter code: Thiazole synthase (252 aa).

Lys91 functions as the Schiff-base intermediate with DXP in the catalytic mechanism. 1-deoxy-D-xylulose 5-phosphate contacts are provided by residues Gly152, 179–180 (AG), and 201–202 (NT).

It belongs to the ThiG family. Homotetramer. Forms heterodimers with either ThiH or ThiS.

It is found in the cytoplasm. The catalysed reaction is [ThiS sulfur-carrier protein]-C-terminal-Gly-aminoethanethioate + 2-iminoacetate + 1-deoxy-D-xylulose 5-phosphate = [ThiS sulfur-carrier protein]-C-terminal Gly-Gly + 2-[(2R,5Z)-2-carboxy-4-methylthiazol-5(2H)-ylidene]ethyl phosphate + 2 H2O + H(+). The protein operates within cofactor biosynthesis; thiamine diphosphate biosynthesis. Catalyzes the rearrangement of 1-deoxy-D-xylulose 5-phosphate (DXP) to produce the thiazole phosphate moiety of thiamine. Sulfur is provided by the thiocarboxylate moiety of the carrier protein ThiS. In vitro, sulfur can be provided by H(2)S. In Erwinia pyrifoliae (strain DSM 12162 / Ep1/96), this protein is Thiazole synthase.